The sequence spans 596 residues: MATGENRTVPDNLKKQLAVSVRNIQWSYGIFWSVSASQPGVLEWGDGYYNGDIKTRKTIQAAEVKIDQLGLERSEQLRELYESLSLAESSASGSSQVTRRASAAALSPEDLTDTEWYYLVCMSFVFNIGEGIPGGALSNGEPIWLCNAETADSKVFTRSLLAKSASLQTVVCFPFLGGVLEIGTTEHIKEDMNVIQSVKTLFLEAPPYTTISTRSDYQEIFDPLSDDKYTPVFITEAFPTTSTSGFEQEPEDHDSFINDGGASQVQSWQFVGEEISNCIHQSLNSSDCVSQTFVGTTGRLACDPRKSRIQRLGQIQEQSNHVNMDDDVHYQGVISTIFKTTHQLILGPQFQNFDKRSSFTRWKRSSSVKTLGEKSQKMIKKILFEVPLMNKKEELLPDTPEETGNHALSEKKRREKLNERFMTLRSIIPSISKIDKVSILDDTIEYLQDLQKRVQELESCRESADTETRITMMKRKKPDDEEERASANCMNSKRKGSDVNVGEDEPADIGYAGLTDNLRISSLGNEVVIELRCAWREGILLEIMDVISDLNLDSHSVQSSTGDGLLCLTVNCKHKGTKIATTGMIQEALQRVAWIC.

Positions E401–L450 constitute a bHLH domain.

In terms of assembly, efficient DNA binding requires dimerization with another bHLH protein. Homodimer and heterodimer with GL3. Interacts with CPC, MYB0/GL1, MYB5, MYB23, MYB113, MYB114, MYB75/PAP1, MYB90/PAP2, TT2, TRY, TTG1 and MYB66/WER. Ubiquitous with higher levels in buds and flowers. Specifically localized in developing root hair cells. Expressed in epidermal root hair cells (trichoblasts) and moves to root hairless cells (atrichoblasts) by a cell-to-cell movement through plasmodesmata (at protein level).

The protein resides in the nucleus. Transcription activator, when associated with MYB75/PAP1, MYB90/PAP2 or TT2. Involved in epidermal cell fate specification. Negatively regulates stomata formation but promotes trichome formation. Together with MYB66/WER, promotes the formation of non-hair cells in root epidermis cells in the N position. Whereas together with CPC, promotes the formation of hair cells in root epidermis cells in the H position by inhibiting non-hair cell formation. Also seems to play a role in the activation of anthocyanin biosynthesis, probably together with MYB75/PAP1. Involved in seed mucilage production. Activates the transcription of GL2. The sequence is that of Transcription factor EGL1 (BHLH2) from Arabidopsis thaliana (Mouse-ear cress).